A 255-amino-acid chain; its full sequence is Shieldin complex subunit 3 (255 aa).

The tract at residues 33–88 (QDFPTHPLPRFIPWFPYDESKLPLKPERLPPVISEEAAESVKQYLAISEPGVKSQS) is sufficient for interaction with MAD2L2. The interval 116-135 (QTNAAHLDKNSGKEKQHKQR) is disordered.

As to quaternary structure, component of the shieldin complex, consisting of SHLD1, SHLD2, SHLD3 and MAD2L2/REV7. Within the complex, SHLD2 forms a scaffold which interacts with a SHLD3-MAD2L2 subcomplex via its N-terminus, and with SHLD1 via its C-terminus. Interacts with ASTE1.

The protein resides in the chromosome. In terms of biological role, component of the shieldin complex, which plays an important role in repair of DNA double-stranded breaks (DSBs). During G1 and S phase of the cell cycle, the complex functions downstream of TP53BP1 to promote non-homologous end joining (NHEJ) and suppress DNA end resection. Mediates various NHEJ-dependent processes including immunoglobulin class-switch recombination, and fusion of unprotected telomeres. This is Shieldin complex subunit 3 from Mus musculus (Mouse).